Here is a 142-residue protein sequence, read N- to C-terminus: Large ribosomal subunit protein uL11 (142 aa).

It belongs to the universal ribosomal protein uL11 family. In terms of assembly, part of the ribosomal stalk of the 50S ribosomal subunit. Interacts with L10 and the large rRNA to form the base of the stalk. L10 forms an elongated spine to which L12 dimers bind in a sequential fashion forming a multimeric L10(L12)X complex. Post-translationally, one or more lysine residues are methylated.

Functionally, forms part of the ribosomal stalk which helps the ribosome interact with GTP-bound translation factors. This is Large ribosomal subunit protein uL11 from Rhodopseudomonas palustris (strain BisB5).